A 417-amino-acid chain; its full sequence is Cobalamin binding intrinsic factor (417 aa).

An N-terminal signal peptide occupies residues 1–18; it reads MAWLTLYLLSVLWAVAGT. 3 disulfide bridges follow: Cys-26/Cys-246, Cys-103/Cys-288, and Cys-143/Cys-182. Residue Asp-171 coordinates cob(II)alamin. At Ser-191 the chain carries Phosphoserine. Asp-222 and Gln-270 together coordinate cob(II)alamin. Asn-311 and Asn-330 each carry an N-linked (GlcNAc...) asparagine glycan. Cob(II)alamin is bound by residues 365–370 and 386–395; these read SWGLIV and WEFLSGKTPL. The N-linked (GlcNAc...) asparagine glycan is linked to Asn-413.

It belongs to the eukaryotic cobalamin transport proteins family. As to quaternary structure, interacts with CUBN (via CUB domains). As to expression, gastric mucosa.

It is found in the secreted. Promotes absorption of the essential vitamin cobalamin (Cbl) in the ileum. After interaction with CUBN, the CBLIF-cobalamin complex is internalized via receptor-mediated endocytosis. The sequence is that of Cobalamin binding intrinsic factor (Cblif) from Mus musculus (Mouse).